Here is a 351-residue protein sequence, read N- to C-terminus: Inner kinetochore subunit fta2 (351 aa).

The disordered stretch occupies residues 1-71; sequence MSGRRYSQIS…SSNGRVDTDR (71 aa). Positions 7–18 are enriched in low complexity; the sequence is SQISQQEGSSSS. Residues 54-66 are compositionally biased toward polar residues; it reads NENSGQSKSSNGR.

This sequence belongs to the CENP-P/CTF19 family. In terms of assembly, component of the heterotetrameric kinetochore subcomplex COMA, which consists of fta2, fta7, mal2 and mis17. The COMA subcomplex is part of a larger constitutive centromere-associated network (CCAN) (also known as central kinetochore Sim4 complex in fission yeast), which is composed of at least cnl2, cnp3, cnp20, fta1, fta2, fta3, fta4, fta6, fta7, mal2, mhf1, mhf2, mis6, mis15, mis17, sim4 and wip1.

It localises to the nucleus. The protein localises to the chromosome. It is found in the centromere. Its subcellular location is the kinetochore. Its function is as follows. Component of the kinetochore, a multiprotein complex that assembles on centromeric DNA and attaches chromosomes to spindle microtubules, mediating chromosome segregation and sister chromatid segregation during meiosis and mitosis. Component of the inner kinetochore COMA complex, which connects centromere-associated proteins and the outer kinetochore. COMA interacts with other inner kinetochore proteins to form the inner kinetochore constitutive centromere-associated network (CCAN), which serves as a structural platform for outer kinetochore assembly. Fta2, fta3 and fta4 associate with the central core (cnt) and inner repeat (inr) region of the centromere. In Schizosaccharomyces pombe (strain 972 / ATCC 24843) (Fission yeast), this protein is Inner kinetochore subunit fta2 (fta2).